The primary structure comprises 176 residues: 3-hydroxydecanoyl-[acyl-carrier-protein] dehydratase (176 aa).

His-71 is an active-site residue.

The protein belongs to the thioester dehydratase family. FabA subfamily. As to quaternary structure, homodimer.

The protein resides in the cytoplasm. It carries out the reaction a (3R)-hydroxyacyl-[ACP] = a (2E)-enoyl-[ACP] + H2O. The enzyme catalyses (3R)-hydroxydecanoyl-[ACP] = (2E)-decenoyl-[ACP] + H2O. The catalysed reaction is (2E)-decenoyl-[ACP] = (3Z)-decenoyl-[ACP]. Its pathway is lipid metabolism; fatty acid biosynthesis. Functionally, necessary for the introduction of cis unsaturation into fatty acids. Catalyzes the dehydration of (3R)-3-hydroxydecanoyl-ACP to E-(2)-decenoyl-ACP and then its isomerization to Z-(3)-decenoyl-ACP. Can catalyze the dehydratase reaction for beta-hydroxyacyl-ACPs with saturated chain lengths up to 16:0, being most active on intermediate chain length. This is 3-hydroxydecanoyl-[acyl-carrier-protein] dehydratase from Rhodopseudomonas palustris (strain HaA2).